The sequence spans 421 residues: MRVELLCTGDELVTGLITDTNSTYLEARLFDLGVKVERVVLVGDVRPDIIQSLKEAASRADVVVVSGGLGPTADDFTLECAAEAAGVPLEEDAQVLDWLHQRYAARGLSPNPSALRMARVPQGSEPVKNPEGSAPLVVMKLGGAQLFFLPGVPREFKALLEGEVLPRIRATLDARPERTYRAFRLLRTVGIPESELDIAVAPMGPRHPRIVFGFRTHAPENHLKLMAEAPSQSEADAALAAVEVECRQMLGTKLFGVDSEAYAAVVLETLRRAGATLAVAESCTGGLIAQQLTAVPGSSEVFIGGAVVYSEKMKSAWVGVPPDVLARHTAVSRETAEAMAEGVRDACGTTYGLSVTGYAGPGGGTPEDPVGTVYCALSAPGVPTRCERISVTGDRDRVRLFAASHTLEMLRQHLLAAPATP.

This sequence belongs to the CinA family.

The protein is CinA-like protein of Myxococcus xanthus (strain DK1622).